The sequence spans 409 residues: Elongation factor Tu, chloroplastic (409 aa).

Residues 10-214 (KPHVNIGTIG…AVDTYIPTPE (205 aa)) form the tr-type G domain. The G1 stretch occupies residues 19–26 (GHVDHGKT). 19–26 (GHVDHGKT) contributes to the GTP binding site. T26 serves as a coordination point for Mg(2+). Residues 60–64 (GITIN) form a G2 region. Residues 81–84 (DCPG) are G3. Residues 81 to 85 (DCPGH) and 136 to 139 (NKED) contribute to the GTP site. The tract at residues 136-139 (NKED) is G4. A G5 region spans residues 174–176 (SAL).

Belongs to the TRAFAC class translation factor GTPase superfamily. Classic translation factor GTPase family. EF-Tu/EF-1A subfamily.

It localises to the plastid. It is found in the chloroplast. The catalysed reaction is GTP + H2O = GDP + phosphate + H(+). In terms of biological role, GTP hydrolase that promotes the GTP-dependent binding of aminoacyl-tRNA to the A-site of ribosomes during protein biosynthesis. This is Elongation factor Tu, chloroplastic (tufA) from Porphyra purpurea (Red seaweed).